Consider the following 429-residue polypeptide: MRDALNTGLIDFLKASPTPFHATASLAQRLEAAGYQRLDERDSWATVPGGRYYVTRNDSSIIAIKLGKQAPLLNGIRMVGAHTDSPCLRVKPQPELQRQGFLQLGVEVYGGALLAPWFDRDLSLAGRVTYRRDGKVESQLIDFKLPIAIIPNLAIHLNRTANEGWAINPQNELPPILAQVAGDERIDFRALLTEQLAREHELIADVVLDYELSFYDTQDAALIGLHGDFIAGARLDNLLSCYAGLQALLAADSDETCVLVCNDHEEVGSCSACGADGPMLEQTLQRLLPDGDSYVRTVQRSLMVSADNAHGVHPNYADKHDGNHGPKLNAGPVIKVNNNQRYATNSETAGFFRHLCMAEEVPVQSFVVRSDMGCGSTIGPITASHLGVRTVDIGLPTFAMHSIRELCGSHDLAHLVKVLTAFYRSRELP.

Residues histidine 82, histidine 156, and histidine 401 each coordinate Zn(2+).

The protein belongs to the peptidase M18 family. It depends on Zn(2+) as a cofactor.

This is Probable M18 family aminopeptidase 2 from Pseudomonas putida (strain GB-1).